Reading from the N-terminus, the 149-residue chain is uncharacterized protein (149 aa).

This is an uncharacterized protein from Acanthamoeba polyphaga (Amoeba).